We begin with the raw amino-acid sequence, 281 residues long: UPF0273 protein PAE3143 (281 aa).

In terms of domain architecture, KaiC spans proline 4–arginine 248. Glycine 31–serine 38 serves as a coordination point for ATP.

It belongs to the UPF0273 family.

This chain is UPF0273 protein PAE3143, found in Pyrobaculum aerophilum (strain ATCC 51768 / DSM 7523 / JCM 9630 / CIP 104966 / NBRC 100827 / IM2).